A 102-amino-acid polypeptide reads, in one-letter code: MKKVLALVVAAAMGLSSAAFAAETATTPAPTATTTKAAPAKTTHHKKQHKAAPAQKAQAAKKHHKNTKAEQKAPEQKAQAAKKHAGKHGHQQPAKPAAQPAA.

An N-terminal signal peptide occupies residues 1 to 21 (MKKVLALVVAAAMGLSSAAFA). Residues 22 to 41 (AETATTPAPTATTTKAAPAK) show a composition bias toward low complexity. Residues 22–58 (AETATTPAPTATTTKAAPAKTTHHKKQHKAAPAQKAQ) constitute a propeptide that is removed on maturation. The interval 22–102 (AETATTPAPT…PAKPAAQPAA (81 aa)) is disordered. Positions 80–90 (AAKKHAGKHGH) are enriched in basic residues. Residues 91-102 (QQPAKPAAQPAA) are compositionally biased toward low complexity.

This sequence belongs to the Asr family. Post-translationally, proteolytic processing gives rise to the active protein.

It is found in the periplasm. Its function is as follows. Required for growth and/or survival at acidic conditions. The polypeptide is Acid shock protein (Shigella flexneri).